A 152-amino-acid chain; its full sequence is Complexin (152 aa).

Positions 1–119 (MAAFIAKQMV…EEEDDDEFAK (119 aa)) are disordered. The span at 23-39 (DEGEKEGNENAEEEAAA) shows a compositional bias: acidic residues. Composition is skewed to basic and acidic residues over residues 41-82 (EEAR…VKEE) and 90-104 (DEGRVGRKKKTKEEL). The tract at residues 59 to 75 (EEEREEMRQTIRDKYGL) is interaction with the SNARE complex. Position 149 is a cysteine methyl ester (cysteine 149). Cysteine 149 is lipidated: S-farnesyl cysteine. The propeptide at 150-152 (SLQ) is removed in mature form.

This sequence belongs to the complexin/synaphin family. Binds to the SNARE core complex containing SNAP25, synaptobrevin and syntaxin-1.

Its subcellular location is the membrane. The protein resides in the cytoplasm. The protein localises to the cytosol. Positively regulates a late step in synaptic vesicle exocytosis. This Doryteuthis pealeii (Longfin inshore squid) protein is Complexin (cpx).